The sequence spans 250 residues: tRNA (guanine-N(1)-)-methyltransferase (250 aa).

S-adenosyl-L-methionine contacts are provided by residues G113 and 133–138 (IGDYVL).

It belongs to the RNA methyltransferase TrmD family. Homodimer.

Its subcellular location is the cytoplasm. It catalyses the reaction guanosine(37) in tRNA + S-adenosyl-L-methionine = N(1)-methylguanosine(37) in tRNA + S-adenosyl-L-homocysteine + H(+). Its function is as follows. Specifically methylates guanosine-37 in various tRNAs. This Shewanella amazonensis (strain ATCC BAA-1098 / SB2B) protein is tRNA (guanine-N(1)-)-methyltransferase.